Consider the following 528-residue polypeptide: Inorganic phosphate transporter 1-2 (528 aa).

Residues 1–24 (MAGSQLNVLVKLDQAKTQWYHFMA) lie on the Cytoplasmic side of the membrane. A helical membrane pass occupies residues 25 to 45 (IVIAGMGFFTDAYDLFCIALV). Over 46-71 (TKLLGRLYYTDITKPNPGTLPPNVSS) the chain is Extracellular. Residues 72-92 (AVTGVALCGTLAGQLFFGWLG) traverse the membrane as a helical segment. Residues 93-99 (DKLGRKS) lie on the Cytoplasmic side of the membrane. Residues 100–120 (VYGFTLILMVVCSIASGLSFG) form a helical membrane-spanning segment. The Extracellular portion of the chain corresponds to 121 to 125 (HTPKS). A helical transmembrane segment spans residues 126–146 (VIATLCFFRFWLGFGIGGDYP). At 147-163 (LSATIMSEYASKKTRGA) the chain is on the cytoplasmic side. The chain crosses the membrane as a helical span at residues 164-184 (FIAAVFAMQGFGILFGAIVAL). Residues 185-212 (VVSAGFRHAYPAPSYAQNPAASLAPQAD) are Extracellular-facing. A helical transmembrane segment spans residues 213–232 (YTWRLILMFGTIPAGLTYYW). The Cytoplasmic segment spans residues 233-296 (RMKMPETARY…RQFMKRHGMH (64 aa)). The helical transmembrane segment at 297–317 (LLATTSTWFLLDIAFYSQNLF) threads the bilayer. Residues 318-348 (QKDIFSKVGWIPPAKTMNALEELYRISRAQA) are Extracellular-facing. The chain crosses the membrane as a helical span at residues 349-369 (LIALCGTIPGYWFTVAFIDIV). Residues 370 to 371 (GR) lie on the Cytoplasmic side of the membrane. A helical membrane pass occupies residues 372–392 (FWIQIMGFFMMTVFMLALGVP). The Extracellular portion of the chain corresponds to 393-405 (YDHWTHPAHHTGF). The helical transmembrane segment at 406–426 (VVLYALTFFFANFGPNSTTFI) threads the bilayer. The Cytoplasmic portion of the chain corresponds to 427 to 442 (VPAEIFPARLRSTCHG). Residues 443–463 (ISAASGKAGAIIGAFGFLYAA) traverse the membrane as a helical segment. At 464 to 481 (QDQHNPDAGYSRGIGIRN) the chain is on the extracellular side. A helical transmembrane segment spans residues 482–502 (ALFVLAGTNFLGMLMTLLVPE). Residues 503–528 (SKGLSLEEMSKDNVVDETAQEAIAQA) lie on the Cytoplasmic side of the membrane.

The protein belongs to the major facilitator superfamily. Phosphate:H(+) symporter (TC 2.A.1.9) family. As to expression, expressed in the root stele and leaf phloem and xylem.

The protein resides in the membrane. Functionally, low-affinity transporter for inorganic phosphate (Pi). Involved in internal Pi transport from root to shoot. Responsible for most of the PHR2-mediated accumulation of excess shoot Pi under abundant Pi conditions, but not for PHO2-mediated accumulation of excess shoot Pi. Acts as a H(+):phosphate symporter. The sequence is that of Inorganic phosphate transporter 1-2 (PTH1-2) from Oryza sativa subsp. japonica (Rice).